We begin with the raw amino-acid sequence, 203 residues long: GTP cyclohydrolase 1 (203 aa).

Zn(2+) contacts are provided by cysteine 87, histidine 90, and cysteine 158.

It belongs to the GTP cyclohydrolase I family. As to quaternary structure, toroid-shaped homodecamer, composed of two pentamers of five dimers.

It carries out the reaction GTP + H2O = 7,8-dihydroneopterin 3'-triphosphate + formate + H(+). The protein operates within cofactor biosynthesis; 7,8-dihydroneopterin triphosphate biosynthesis; 7,8-dihydroneopterin triphosphate from GTP: step 1/1. This chain is GTP cyclohydrolase 1, found in Xylella fastidiosa (strain 9a5c).